Here is a 245-residue protein sequence, read N- to C-terminus: 5'-nucleotidase SurE (245 aa).

Residues aspartate 8, aspartate 9, serine 39, and asparagine 97 each coordinate a divalent metal cation.

It belongs to the SurE nucleotidase family. Requires a divalent metal cation as cofactor.

The protein localises to the cytoplasm. It catalyses the reaction a ribonucleoside 5'-phosphate + H2O = a ribonucleoside + phosphate. Its function is as follows. Nucleotidase that shows phosphatase activity on nucleoside 5'-monophosphates. This Clostridium kluyveri (strain NBRC 12016) protein is 5'-nucleotidase SurE.